A 385-amino-acid polypeptide reads, in one-letter code: Succinate--CoA ligase [ADP-forming] subunit beta (385 aa).

The 233-residue stretch at 9–241 (KELLRDFGIN…IDEEEPSELE (233 aa)) folds into the ATP-grasp domain. ATP is bound by residues Lys46, 53–55 (GRG), Glu99, Thr102, and Glu107. Residues Asn196 and Asp210 each coordinate Mg(2+). Residues Asn261 and 318–320 (GIV) each bind substrate.

The protein belongs to the succinate/malate CoA ligase beta subunit family. As to quaternary structure, heterotetramer of two alpha and two beta subunits. Mg(2+) serves as cofactor.

The catalysed reaction is succinate + ATP + CoA = succinyl-CoA + ADP + phosphate. The enzyme catalyses GTP + succinate + CoA = succinyl-CoA + GDP + phosphate. Its pathway is carbohydrate metabolism; tricarboxylic acid cycle; succinate from succinyl-CoA (ligase route): step 1/1. Its function is as follows. Succinyl-CoA synthetase functions in the citric acid cycle (TCA), coupling the hydrolysis of succinyl-CoA to the synthesis of either ATP or GTP and thus represents the only step of substrate-level phosphorylation in the TCA. The beta subunit provides nucleotide specificity of the enzyme and binds the substrate succinate, while the binding sites for coenzyme A and phosphate are found in the alpha subunit. The polypeptide is Succinate--CoA ligase [ADP-forming] subunit beta (Campylobacter fetus subsp. fetus (strain 82-40)).